The primary structure comprises 266 residues: GTP cyclohydrolase FolE2 (266 aa).

This sequence belongs to the GTP cyclohydrolase IV family.

It catalyses the reaction GTP + H2O = 7,8-dihydroneopterin 3'-triphosphate + formate + H(+). Its pathway is cofactor biosynthesis; 7,8-dihydroneopterin triphosphate biosynthesis; 7,8-dihydroneopterin triphosphate from GTP: step 1/1. Its function is as follows. Converts GTP to 7,8-dihydroneopterin triphosphate. In Syntrophotalea carbinolica (strain DSM 2380 / NBRC 103641 / GraBd1) (Pelobacter carbinolicus), this protein is GTP cyclohydrolase FolE2.